A 374-amino-acid polypeptide reads, in one-letter code: 5-aminosalicylate 1,2-dioxygenase (374 aa).

This sequence belongs to the gentisate 1,2-dioxygenase family. Fe(2+) is required as a cofactor.

It carries out the reaction 5-amino-2-hydroxybenzoate + O2 = (2Z,4E)-4-amino-6-oxohepta-2,4-dienedioate + H(+). Its activity is regulated as follows. Inhibited by SDS and o-phenanthroline, a ferrous iron chelator. Partially inhibited by EDTA. Its function is as follows. Involved in the biodegradation of 3-aminobenzoate. Catalyzes the cleavage of the 5-aminosalicylate (5ASA) aromatic ring to form 4-amino-6-oxohepta-2,4-dienedioate (cis-ACOHDA). Can also convert gentisate, but the catalytic efficiency with 5ASA is 70-fold higher. This chain is 5-aminosalicylate 1,2-dioxygenase, found in Comamonas sp.